The chain runs to 115 residues: Large ribosomal subunit protein bL19 (115 aa).

This sequence belongs to the bacterial ribosomal protein bL19 family.

Functionally, this protein is located at the 30S-50S ribosomal subunit interface and may play a role in the structure and function of the aminoacyl-tRNA binding site. This is Large ribosomal subunit protein bL19 from Streptococcus pneumoniae (strain JJA).